A 54-amino-acid polypeptide reads, in one-letter code: Large ribosomal subunit protein bL33 (54 aa).

The protein belongs to the bacterial ribosomal protein bL33 family.

This is Large ribosomal subunit protein bL33 from Corynebacterium efficiens (strain DSM 44549 / YS-314 / AJ 12310 / JCM 11189 / NBRC 100395).